We begin with the raw amino-acid sequence, 316 residues long: MRSALATGRRVQVRVPATSANLGPGFDTLGLALALYDDLTVTVRDAPGATVDVRGVGAGEVPTDETNLVVTAIAHTFAAFDQPMPGLDLVAENRIPHGRGLGSSGAAIVSGIMAAQGLLAGTVEIDADALLRLATEMEGHPDNVAPALFGGLTIAWVDGQGPQHKKLAVHRGVSPLVLVPVATMSTALARSLQPESVPHEDAIFNVSRSALLIAALIQSPELLLAATEDRLHQDYRAAAMPETNELVHLLRERGYAAVVSGAGPSLLVLGSDPGQRLTAAELVAERSTNPWTALMLAVDVKGSTVQVVDEGSAPAA.

P96 to A106 contacts ATP.

This sequence belongs to the GHMP kinase family. Homoserine kinase subfamily.

It is found in the cytoplasm. It catalyses the reaction L-homoserine + ATP = O-phospho-L-homoserine + ADP + H(+). It participates in amino-acid biosynthesis; L-threonine biosynthesis; L-threonine from L-aspartate: step 4/5. Its function is as follows. Catalyzes the ATP-dependent phosphorylation of L-homoserine to L-homoserine phosphate. This chain is Homoserine kinase, found in Clavibacter michiganensis subsp. michiganensis (strain NCPPB 382).